We begin with the raw amino-acid sequence, 166 residues long: V-type proton ATPase subunit c4 (166 aa).

The Lumenal segment spans residues 1–13 (MASSGFSGDETAP). Residues 14-34 (FFGFLGAAAALVFSCMGAAYG) form a helical membrane-spanning segment. The Cytoplasmic portion of the chain corresponds to 35–56 (TAKSGVGVASMGVMRPELVMKS). Residues 57 to 77 (IVPVVMAGVLGIYGLIIAVII) traverse the membrane as a helical segment. At 78 to 96 (STGINPKAKSYYLFDGYAH) the chain is on the lumenal side. The chain crosses the membrane as a helical span at residues 97–118 (LSSGLACGLAGLSAGMAIGIVG). Residues 119–130 (DAGVRANAQQPK) lie on the Cytoplasmic side of the membrane. A helical transmembrane segment spans residues 131-156 (LFVGMILILIFAEALALYGLIVGIIL). Over 157–166 (SSRAGQSRAE) the chain is Lumenal.

It belongs to the V-ATPase proteolipid subunit family. As to quaternary structure, V-ATPase is a heteromultimeric enzyme composed of a peripheral catalytic V1 complex (components A to H) attached to an integral membrane V0 proton pore complex (components: a, c, c'', d and e). The proteolipid components c and c'' are present as a hexameric ring that forms the proton-conducting pore. Interacts with APD2.

It localises to the vacuole membrane. Its function is as follows. Proton-conducting pore forming subunit of the membrane integral V0 complex of vacuolar ATPase. V-ATPase is responsible for acidifying a variety of intracellular compartments in eukaryotic cells. The sequence is that of V-type proton ATPase subunit c4 (VHA-c4) from Arabidopsis thaliana (Mouse-ear cress).